A 67-amino-acid polypeptide reads, in one-letter code: Conotoxin Cl6.6b (67 aa).

Positions 1–24 are cleaved as a signal peptide; that stretch reads MKLTCVLIAAVLLLAVCQLDSADA. The propeptide occupies 25–37; sequence TGYMRKNPSLRSP. 3 cysteine pairs are disulfide-bonded: C43-C57, C50-C61, and C56-C65.

Belongs to the conotoxin O1 superfamily. As to expression, expressed by the venom duct.

Its subcellular location is the secreted. The polypeptide is Conotoxin Cl6.6b (Californiconus californicus (California cone)).